We begin with the raw amino-acid sequence, 156 residues long: Rhombotin-1 (156 aa).

2 LIM zinc-binding domains span residues 24–83 (CAGC…RLFG) and 88–147 (CAAC…EGQL).

Expressed mainly in the central nervous. Low level of expression in other tissues including thymus.

The protein resides in the nucleus. May be involved in gene regulation within neural lineage cells potentially by direct DNA binding or by binding to other transcription factors. The sequence is that of Rhombotin-1 (LMO1) from Homo sapiens (Human).